Consider the following 886-residue polypeptide: Cadherin-1 (886 aa).

The signal sequence occupies residues 1 to 23; the sequence is MGARCRSFSALLLLLQVSSWLCQ. A propeptide spanning residues 24–158 is cleaved from the precursor; it reads QPESESDSCR…FHQGLRRQKR (135 aa). Residues 24–713 are Extracellular-facing; the sequence is QPESESDSCR…SLEAGLQVPA (690 aa). 5 Cadherin domains span residues 159–266, 267–379, 380–490, 491–597, and 598–701; these read DWVI…RPEF, IQEV…APIF, NPST…APIF, VPAE…DNAP, and IPEP…NCMK. D261 contacts Ca(2+). Residues S284 and S289 are each glycosylated (O-linked (Man...) serine). Residue D292 coordinates Ca(2+). O-linked (Man...) threonine glycosylation is found at T362, T474, T476, and T513. The N-linked (GlcNAc...) asparagine glycan is linked to N562. 3 O-linked (Man...) threonine glycosylation sites follow: T580, T582, and T584. N-linked (GlcNAc...) asparagine glycosylation is present at N641. The chain crosses the membrane as a helical span at residues 714–734; it reads ILGILGGILALLILILLLLLF. The Cytoplasmic segment spans residues 735 to 886; sequence LRRRTVVKEP…ADMYGGGEED (152 aa). Positions 751 to 771 are disordered; the sequence is DTRDNVYYYDEEGGGEEDQDF. Phosphotyrosine; by SRC is present on residues Y757, Y758, and Y759. Over residues 759–771 the composition is skewed to acidic residues; the sequence is YDEEGGGEEDQDF. The required for binding CTNND1 and PSEN1 stretch occupies residues 762 to 773; that stretch reads EGGGEEDQDFDL. A phosphoserine mark is found at S774, S797, S842, S844, and S850. The interval 815–886 is required for binding alpha, beta and; it reads IDENLKAADS…ADMYGGGEED (72 aa).

In terms of assembly, homodimer; disulfide-linked. Component of an E-cadherin/ catenin adhesion complex composed of at least E-cadherin/CDH1, beta-catenin/CTNNB1 or gamma-catenin/JUP, and potentially alpha-catenin/CTNNA1; the complex is located to adherens junctions. Found in a complex composed of CDH1, RAP1A and PKP3; PKP3 acts as a scaffold protein within the complex, the complex is required for CDH1 localization to mature desmosome cell junctions. Interacts with the TRPV4 and CTNNB1 complex. Interacts with CTNND1. The stable association of CTNNA1 is controversial as CTNNA1 was shown not to bind to F-actin when assembled in the complex. Alternatively, the CTNNA1-containing complex may be linked to F-actin by other proteins such as LIMA1. Interaction with PSEN1, cleaves CDH1 resulting in the disassociation of cadherin-based adherens junctions (CAJs). Interacts with AJAP1 and DLGAP5. Interacts with TBC1D2. Interacts with LIMA1. Interacts with CAV1. Interacts with PIP5K1C. Interacts with DDR1; this stabilizes CDH1 at the cell surface and inhibits its internalization. Interacts with RAPGEF2. Interacts with RAB8B. Interacts with KLRG1. Forms a ternary complex composed of ADAM10, CADH1 and EPHA4; within the complex, CADH1 is cleaved by ADAM10 which disrupts adherens junctions. Interacts with SPEF1. Interacts with CTNNB1 and PKP2. Interacts with AMOTL2; the interaction may facilitate binding of radial actin fibers to cell junction complexes. Interacts with DSG3; the interaction is required for CDH1 localization to developing adherens junctions. During apoptosis or with calcium influx, cleaved by a membrane-bound metalloproteinase (ADAM10), PS1/gamma-secretase and caspase-3. Processing by the metalloproteinase, induced by calcium influx, causes disruption of cell-cell adhesion and the subsequent release of beta-catenin into the cytoplasm. The residual membrane-tethered cleavage product is rapidly degraded via an intracellular proteolytic pathway. Cleavage by caspase-3 releases the cytoplasmic tail resulting in disintegration of the actin microfilament system. The gamma-secretase-mediated cleavage promotes disassembly of adherens junctions. During development of the cochlear organ of Corti, cleavage by ADAM10 at adherens junctions promotes pillar cell separation. In terms of processing, N-glycosylation at Asn-641 is essential for expression, folding and trafficking. Addition of bisecting N-acetylglucosamine by MGAT3 modulates its cell membrane location. Post-translationally, ubiquitinated by a SCF complex containing SKP2, which requires prior phosphorylation by CK1/CSNK1A1. Ubiquitinated by CBLL1/HAKAI, requires prior phosphorylation at Tyr-758. O-glycosylated. O-manosylated by TMTC1, TMTC2, TMTC3 or TMTC4. Ser-289 and Thr-513 are O-manosylated by TMTC2 or TMTC4 but not TMTC1 or TMTC3.

The protein resides in the cell junction. Its subcellular location is the adherens junction. The protein localises to the cell membrane. It is found in the endosome. It localises to the golgi apparatus. The protein resides in the trans-Golgi network. Its subcellular location is the cytoplasm. The protein localises to the desmosome. In terms of biological role, cadherins are calcium-dependent cell adhesion proteins. They preferentially interact with themselves in a homophilic manner in connecting cells; cadherins may thus contribute to the sorting of heterogeneous cell types. CDH1 is involved in mechanisms regulating cell-cell adhesions, mobility and proliferation of epithelial cells. Promotes organization of radial actin fiber structure and cellular response to contractile forces, via its interaction with AMOTL2 which facilitates anchoring of radial actin fibers to CDH1 junction complexes at the cell membrane. Plays a role in the early stages of desmosome cell-cell junction formation via facilitating the recruitment of DSG2 and DSP to desmosome plaques. Has a potent invasive suppressor role. It is a ligand for integrin alpha-E/beta-7. E-Cad/CTF2 promotes non-amyloidogenic degradation of Abeta precursors. Has a strong inhibitory effect on APP C99 and C83 production. This is Cadherin-1 (Cdh1) from Rattus norvegicus (Rat).